Consider the following 333-residue polypeptide: 3-isopropylmalate/3-methylmalate dehydrogenase (333 aa).

The substrate site is built by R81, R91, R112, and D203. Residues D203, D227, and D231 each contribute to the Mg(2+) site. An NAD(+)-binding site is contributed by 260-272 (GSAPDIAGKKIAN).

It belongs to the isocitrate and isopropylmalate dehydrogenases family. Homotetramer. Mg(2+) is required as a cofactor. It depends on Mn(2+) as a cofactor.

It is found in the cytoplasm. The catalysed reaction is (2R,3S)-3-isopropylmalate + NAD(+) = 4-methyl-2-oxopentanoate + CO2 + NADH. It carries out the reaction (2R,3S)-3-methylmalate + NAD(+) = 2-oxobutanoate + CO2 + NADH. The enzyme catalyses (R)-malate + NAD(+) = pyruvate + CO2 + NADH. It participates in amino-acid biosynthesis; L-leucine biosynthesis; L-leucine from 3-methyl-2-oxobutanoate: step 3/4. The protein operates within amino-acid biosynthesis; L-isoleucine biosynthesis; 2-oxobutanoate from pyruvate: step 3/3. In terms of biological role, catalyzes the oxidation of 3-carboxy-2-hydroxy-4-methylpentanoate (3-isopropylmalate) to 3-carboxy-4-methyl-2-oxopentanoate, which decarboxylates to 4-methyl-2-oxopentanoate (2-oxoisocaproate). Also catalyzes the oxidative decarboxylation of 3-methylmalate to 2-oxobutyrate, and that of D-malate to pyruvate. Cannot use NADP(+) instead of NAD(+). Cannot catalyze the oxidation of L-malate, L-tartrate, D-tartrate, DL-isocitrate, or DL-lactate. The polypeptide is 3-isopropylmalate/3-methylmalate dehydrogenase (leuB) (Methanocaldococcus jannaschii (strain ATCC 43067 / DSM 2661 / JAL-1 / JCM 10045 / NBRC 100440) (Methanococcus jannaschii)).